The chain runs to 531 residues: Peptide chain release factor 3 (531 aa).

The tr-type G domain occupies 13–282 (SKRRTFAIIS…GLTQWAPSPM (270 aa)). GTP is bound by residues 22–29 (SHPDAGKT), 90–94 (DTPGH), and 144–147 (NKLD).

Belongs to the TRAFAC class translation factor GTPase superfamily. Classic translation factor GTPase family. PrfC subfamily.

The protein resides in the cytoplasm. Functionally, increases the formation of ribosomal termination complexes and stimulates activities of RF-1 and RF-2. It binds guanine nucleotides and has strong preference for UGA stop codons. It may interact directly with the ribosome. The stimulation of RF-1 and RF-2 is significantly reduced by GTP and GDP, but not by GMP. The chain is Peptide chain release factor 3 from Vibrio cholerae serotype O1 (strain ATCC 39541 / Classical Ogawa 395 / O395).